We begin with the raw amino-acid sequence, 190 residues long: Putative manganese efflux pump MntP (190 aa).

6 consecutive transmembrane segments (helical) span residues 3–23 (MSAT…ASIG), 41–61 (LIFG…GFFA), 62–82 (SQYI…ILGG), 105–127 (LALL…VGLA), 143–163 (ATMI…PILG), and 168–188 (VMGG…HLGY).

It belongs to the MntP (TC 9.B.29) family.

Its subcellular location is the cell inner membrane. In terms of biological role, probably functions as a manganese efflux pump. The chain is Putative manganese efflux pump MntP from Pectobacterium carotovorum subsp. carotovorum (strain PC1).